A 718-amino-acid polypeptide reads, in one-letter code: Kinesin-like protein KIF2C (718 aa).

The tract at residues 1–248 (MESLPARLFP…CHPLTLTDPT (248 aa)) is globular. A phosphoserine mark is found at Ser3 and Ser19. Residues 86–111 (PKQKRRSVNSKIPAPKEGLRSRSTRM) are disordered. At Ser92 the chain carries Phosphoserine; by AURKB. The short motif at 95–98 (SKIP) is the Microtubule tip localization signal element. A phosphoserine mark is found at Ser106, Ser108, Ser112, Ser163, and Ser186. Residues 201-232 (EKRAQNSEIRIKRAQEYDSSFPNWEFARMIKE) form a negative regulator of microtubule-binding region. One can recognise a Kinesin motor domain in the interval 252–582 (RICVCVRKRP…LRYADRVKEL (331 aa)). ATP is bound by residues Arg258 and 342–349 (GQTGSGKT). The Nuclear localization signal signature appears at 409–412 (KKAK). Residues Ser513 and Ser626 each carry the phosphoserine modification. Coiled-coil stretches lie at residues 613–651 (NFKE…IIQQ) and 689–716 (ALRE…SKKR).

It belongs to the TRAFAC class myosin-kinesin ATPase superfamily. Kinesin family. MCAK/KIF2 subfamily. In terms of assembly, interacts with CENPH. Interacts with MTUS2/TIP150; the interaction is direct. Interacts with MAPRE1; the interaction is direct, regulated by phosphorylation and is probably required for targeting to growing microtubule plus ends. Interacts with KIF18B at microtubule tips; this interaction increases the affinity of both partners for microtubule plus ends and is required for robust microtubule depolymerization. Phosphorylation by AURKA or AURKB strongly reduces KIF18B-binding. Post-translationally, phosphorylation by AURKB, regulates association with centromeres and kinetochores and the microtubule depolymerization activity. In terms of processing, ubiquitinated.

It localises to the cytoplasm. It is found in the cytoskeleton. The protein resides in the nucleus. Its subcellular location is the chromosome. The protein localises to the centromere. It localises to the kinetochore. In complex with KIF18B, constitutes the major microtubule plus-end depolymerizing activity in mitotic cells. Regulates the turnover of microtubules at the kinetochore and functions in chromosome segregation during mitosis. Plays a role in chromosome congression and is required for the lateral to end-on conversion of the chromosome-microtubule attachment. This Cricetulus griseus (Chinese hamster) protein is Kinesin-like protein KIF2C (KIF2C).